The primary structure comprises 330 residues: Peroxisomal membrane protein PEX13 (330 aa).

Residues 1–14 (MSAPPTNQPPPLPP) show a composition bias toward pro residues. The segment at 1–20 (MSAPPTNQPPPLPPRSFDNQ) is disordered. A helical transmembrane segment spans residues 193–213 (ASVNWPAALFWVVAIGGPWLI). The SH3 domain maps to 235–300 (APHYTAQALF…PINYVRIVGK (66 aa)).

Belongs to the peroxin-13 family. As to quaternary structure, interacts with PEX14/prx-14; forming the PEX13-PEX14 docking complex.

The protein resides in the peroxisome membrane. Component of the PEX13-PEX14 docking complex, a translocon channel that specifically mediates the import of peroxisomal cargo proteins bound to PEX5/prx-5 receptor. The PEX13-PEX14 docking complex forms a large import pore which can be opened to a diameter of about 9 nm. Mechanistically, PEX5/prx-5 receptor along with cargo proteins associates with the PEX14/prx-14 subunit of the PEX13-PEX14 docking complex in the cytosol, leading to the insertion of the receptor into the organelle membrane with the concomitant translocation of the cargo into the peroxisome matrix. The polypeptide is Peroxisomal membrane protein PEX13 (prx-13) (Caenorhabditis elegans).